A 321-amino-acid chain; its full sequence is MSDYLVAALYKFVSLPNYESLREPLIDFCQSREIKGTLLLAAEGINGTVAGTPEAIQALLEELRRQPGLDALEHKESVATEQPFYRLKIKLKKEIVTMGVEGIDPNLVVGTYVAPAEWNALISDPDVTVIDTRNDYEYEIGTFRGAVNPNTQSFRQLPQYVAENLDPNKHKKVAMFCTGGIRCEKSTALMKQMGFEEVYHLQGGILKYLEEVPEGNSLWDGECFVFDNRVSVKHGLEEGSYELCHGCRFPINETDKQSDKYIKGVACPRCYDEQTPEQRSRFLERQKQMELASRKGELHIGDRADIAKSRTTQGAPSADGE.

A Rhodanese domain is found at 123-217 (SDPDVTVIDT…YLEEVPEGNS (95 aa)). Residue Cys177 is the Cysteine persulfide intermediate of the active site. The segment covering 294–308 (RKGELHIGDRADIAK) has biased composition (basic and acidic residues). The disordered stretch occupies residues 294–321 (RKGELHIGDRADIAKSRTTQGAPSADGE).

The protein belongs to the TrhO family.

It catalyses the reaction uridine(34) in tRNA + AH2 + O2 = 5-hydroxyuridine(34) in tRNA + A + H2O. Its function is as follows. Catalyzes oxygen-dependent 5-hydroxyuridine (ho5U) modification at position 34 in tRNAs. The protein is tRNA uridine(34) hydroxylase of Teredinibacter turnerae (strain ATCC 39867 / T7901).